The chain runs to 78 residues: Large ribosomal subunit protein bL28 (78 aa).

This sequence belongs to the bacterial ribosomal protein bL28 family.

The sequence is that of Large ribosomal subunit protein bL28 from Parasynechococcus marenigrum (strain WH8102).